The primary structure comprises 296 residues: tRNA dimethylallyltransferase (296 aa).

2-9 provides a ligand contact to ATP; that stretch reads GPTASGKT. 4-9 lines the substrate pocket; that stretch reads TASGKT. Interaction with substrate tRNA stretches follow at residues 27–30, 151–155, and 232–237; these read DSAL, QRLSR, and RCVGYR.

This sequence belongs to the IPP transferase family. As to quaternary structure, monomer. Mg(2+) is required as a cofactor.

It carries out the reaction adenosine(37) in tRNA + dimethylallyl diphosphate = N(6)-dimethylallyladenosine(37) in tRNA + diphosphate. Functionally, catalyzes the transfer of a dimethylallyl group onto the adenine at position 37 in tRNAs that read codons beginning with uridine, leading to the formation of N6-(dimethylallyl)adenosine (i(6)A). This chain is tRNA dimethylallyltransferase, found in Shewanella frigidimarina (strain NCIMB 400).